A 341-amino-acid polypeptide reads, in one-letter code: Mitochondrial transcription factor 1 (341 aa).

S-adenosyl-L-methionine-binding residues include Leu-23, Glu-77, Asp-101, and Asn-137.

This sequence belongs to the class I-like SAM-binding methyltransferase superfamily. rRNA adenine N(6)-methyltransferase family.

Its subcellular location is the mitochondrion intermembrane space. Functionally, mitochondrial transcription factor that confers selective promoter recognition on the core subunit of the yeast mitochondrial RNA polymerase. Interacts with DNA in a non-specific manner. The sequence is that of Mitochondrial transcription factor 1 (MTF1) from Saccharomyces cerevisiae (strain ATCC 204508 / S288c) (Baker's yeast).